The primary structure comprises 504 residues: Cytochrome P450 6a9 (504 aa).

Residue Cys-449 participates in heme binding.

Belongs to the cytochrome P450 family. It depends on heme as a cofactor.

The protein localises to the endoplasmic reticulum membrane. Its subcellular location is the microsome membrane. In terms of biological role, involved in the metabolism of insect hormones and in the breakdown of synthetic insecticides. The sequence is that of Cytochrome P450 6a9 (Cyp6a9) from Drosophila melanogaster (Fruit fly).